The chain runs to 366 residues: Aminomethyltransferase (366 aa).

This sequence belongs to the GcvT family. The glycine cleavage system is composed of four proteins: P, T, L and H.

It catalyses the reaction N(6)-[(R)-S(8)-aminomethyldihydrolipoyl]-L-lysyl-[protein] + (6S)-5,6,7,8-tetrahydrofolate = N(6)-[(R)-dihydrolipoyl]-L-lysyl-[protein] + (6R)-5,10-methylene-5,6,7,8-tetrahydrofolate + NH4(+). In terms of biological role, the glycine cleavage system catalyzes the degradation of glycine. The chain is Aminomethyltransferase from Bordetella parapertussis (strain 12822 / ATCC BAA-587 / NCTC 13253).